The primary structure comprises 281 residues: Feruloyl esterase A (281 aa).

Residues 1–21 (MKQFSAKYALILLATAGQALA) form the signal peptide. Cystine bridges form between cysteine 50-cysteine 279, cysteine 112-cysteine 115, and cysteine 248-cysteine 255. Aspartate 98 contacts substrate. N-linked (GlcNAc...) asparagine glycosylation is present at asparagine 100. Residue tyrosine 101 coordinates substrate. The active-site Nucleophile is the serine 154. Aspartate 215 serves as the catalytic Charge relay system. Residue histidine 268 participates in substrate binding. Histidine 268 functions as the Charge relay system in the catalytic mechanism.

Post-translationally, glycosylated.

It is found in the secreted. It carries out the reaction feruloyl-polysaccharide + H2O = ferulate + polysaccharide.. Its activity is regulated as follows. Inhibited by the specific serine esterase inhibitor diisopropylfluorophosphate. Involved in degradation of plant cell walls. Hydrolyzes the feruloyl-arabinose ester bond in arabinoxylans, and the feruloyl-galactose ester bond in pectin. Binds to cellulose. This is Feruloyl esterase A (faeA) from Aspergillus niger.